An 841-amino-acid chain; its full sequence is Alpha-glucuronidase A (841 aa).

Positions Met1–Ala20 are cleaved as a signal peptide. N-linked (GlcNAc...) asparagine glycans are attached at residues Asn51, Asn76, Asn149, Asn222, Asn279, Asn310, Asn343, Asn450, Asn465, Asn527, Asn576, Asn682, Asn723, and Asn732.

It belongs to the glycosyl hydrolase 67 family.

It is found in the secreted. It carries out the reaction an alpha-D-glucuronoside + H2O = D-glucuronate + an alcohol. In terms of biological role, alpha-glucuronidase involved in the hydrolysis of xylan, a major structural heterogeneous polysaccharide found in plant biomass representing the second most abundant polysaccharide in the biosphere, after cellulose. Releases 4-O-methylglucuronic acid from xylan. This Aspergillus tubingensis protein is Alpha-glucuronidase A (aguA).